We begin with the raw amino-acid sequence, 179 residues long: Monothiol glutaredoxin-S12, chloroplastic (179 aa).

Residues 1-61 (MVAATVNLAN…WPPLRCSSVK (61 aa)) constitute a chloroplast transit peptide. Alanine 62 bears the N-acetylalanine mark. The 102-residue stretch at 75-176 (EETVKTTVAE…AILAEANGKN (102 aa)) folds into the Glutaredoxin domain. Cysteine 95 is a [2Fe-2S] cluster binding site.

It belongs to the glutaredoxin family. CPYC subfamily.

The protein localises to the plastid. Its subcellular location is the chloroplast. May only reduce GSH-thiol disulfides, but not protein disulfides. In Arabidopsis thaliana (Mouse-ear cress), this protein is Monothiol glutaredoxin-S12, chloroplastic (GRXS12).